A 162-amino-acid chain; its full sequence is MGIRDAAYPGSFDPITFGHVNIVKRSIERFDNLYVVVVNNPNKKYLFSLQERIEMVKKDLEDIPNVIVESFDGLLVNYLKEKKIYNLIRGLRAVSDYEYELQMANANHMLFPQLEIFFLMADTDFSYISSSMIKEIASYNGDVSKWVSKFVELKLKEKLLKK.

Ser11 is a binding site for substrate. ATP contacts are provided by residues 11–12 (SF) and His19. Lys43, Leu75, and Arg89 together coordinate substrate. Residues 90–92 (GLR), Glu100, and 125–131 (FSYISSS) each bind ATP.

This sequence belongs to the bacterial CoaD family. As to quaternary structure, homohexamer. Mg(2+) serves as cofactor.

It is found in the cytoplasm. It carries out the reaction (R)-4'-phosphopantetheine + ATP + H(+) = 3'-dephospho-CoA + diphosphate. Its pathway is cofactor biosynthesis; coenzyme A biosynthesis; CoA from (R)-pantothenate: step 4/5. In terms of biological role, reversibly transfers an adenylyl group from ATP to 4'-phosphopantetheine, yielding dephospho-CoA (dPCoA) and pyrophosphate. This Petrotoga mobilis (strain DSM 10674 / SJ95) protein is Phosphopantetheine adenylyltransferase.